We begin with the raw amino-acid sequence, 469 residues long: Argininosuccinate lyase (469 aa).

It belongs to the lyase 1 family. Argininosuccinate lyase subfamily.

The protein localises to the cytoplasm. It catalyses the reaction 2-(N(omega)-L-arginino)succinate = fumarate + L-arginine. The protein operates within amino-acid biosynthesis; L-arginine biosynthesis; L-arginine from L-ornithine and carbamoyl phosphate: step 3/3. The chain is Argininosuccinate lyase from Cupriavidus metallidurans (strain ATCC 43123 / DSM 2839 / NBRC 102507 / CH34) (Ralstonia metallidurans).